A 374-amino-acid polypeptide reads, in one-letter code: UDP-N-acetylglucosamine--N-acetylmuramyl-(pentapeptide) pyrophosphoryl-undecaprenol N-acetylglucosamine transferase (374 aa).

Residues 13–15, N124, R165, S193, and Q294 each bind UDP-N-acetyl-alpha-D-glucosamine; that span reads TGG.

This sequence belongs to the glycosyltransferase 28 family. MurG subfamily.

The protein localises to the cell inner membrane. The catalysed reaction is di-trans,octa-cis-undecaprenyl diphospho-N-acetyl-alpha-D-muramoyl-L-alanyl-D-glutamyl-meso-2,6-diaminopimeloyl-D-alanyl-D-alanine + UDP-N-acetyl-alpha-D-glucosamine = di-trans,octa-cis-undecaprenyl diphospho-[N-acetyl-alpha-D-glucosaminyl-(1-&gt;4)]-N-acetyl-alpha-D-muramoyl-L-alanyl-D-glutamyl-meso-2,6-diaminopimeloyl-D-alanyl-D-alanine + UDP + H(+). It functions in the pathway cell wall biogenesis; peptidoglycan biosynthesis. In terms of biological role, cell wall formation. Catalyzes the transfer of a GlcNAc subunit on undecaprenyl-pyrophosphoryl-MurNAc-pentapeptide (lipid intermediate I) to form undecaprenyl-pyrophosphoryl-MurNAc-(pentapeptide)GlcNAc (lipid intermediate II). The polypeptide is UDP-N-acetylglucosamine--N-acetylmuramyl-(pentapeptide) pyrophosphoryl-undecaprenol N-acetylglucosamine transferase (Rhizobium etli (strain CIAT 652)).